Reading from the N-terminus, the 226-residue chain is Putative ABC transporter ATP-binding protein DR_2469 (226 aa).

The region spanning 2-225 (IELRHVSHHY…LRVYRERMTW (224 aa)) is the ABC transporter domain. Position 33–40 (33–40 (GSNGSGKS)) interacts with ATP.

The protein belongs to the ABC transporter superfamily.

The protein localises to the cell membrane. Its function is as follows. Probably part of an ABC transporter complex. Responsible for energy coupling to the transport system. This is Putative ABC transporter ATP-binding protein DR_2469 from Deinococcus radiodurans (strain ATCC 13939 / DSM 20539 / JCM 16871 / CCUG 27074 / LMG 4051 / NBRC 15346 / NCIMB 9279 / VKM B-1422 / R1).